The sequence spans 297 residues: uncharacterized protein (297 aa).

4 helical membrane passes run 3–23, 38–58, 103–123, and 128–148; these read DYIY…LYML, VIHI…MPAL, IEGI…TALL, and YVFL…LLAM.

Its subcellular location is the cell membrane. This is an uncharacterized protein from Bacillus subtilis (strain 168).